The following is a 303-amino-acid chain: Mevalonate kinase (303 aa).

90–100 (PAGSGLGSSAA) contributes to the ATP binding site. Catalysis depends on aspartate 141, which acts as the Proton acceptor.

The protein belongs to the GHMP kinase family. Mevalonate kinase subfamily. As to quaternary structure, homodimer. Mg(2+) is required as a cofactor.

The protein localises to the cytoplasm. It catalyses the reaction (R)-mevalonate + ATP = (R)-5-phosphomevalonate + ADP + H(+). The protein operates within isoprenoid biosynthesis; isopentenyl diphosphate biosynthesis via mevalonate pathway; isopentenyl diphosphate from (R)-mevalonate: step 1/3. Functionally, catalyzes the phosphorylation of (R)-mevalonate (MVA) to (R)-mevalonate 5-phosphate (MVAP). Functions in the mevalonate (MVA) pathway leading to isopentenyl diphosphate (IPP), a key precursor for the biosynthesis of isoprenoid compounds such as archaeal membrane lipids. This is Mevalonate kinase from Methanothermobacter thermautotrophicus (strain ATCC 29096 / DSM 1053 / JCM 10044 / NBRC 100330 / Delta H) (Methanobacterium thermoautotrophicum).